Reading from the N-terminus, the 380-residue chain is MTSIKTKVIHGGISTDKTTGAVSVPIYQTSTYKQNGLGQPKEYEYSRSGNPTRHALEELIADLEGGVQGFAFSSGLAGIHAVLSLFSAGDHIILADDVYGGTFRLMDKVLTKTGIIYDLVDLSNLDDLKAAFKEETKAIYFETPSNPLLKVLDIKEISAIAKAHDALTLVDNTFATPYLQQPIALGADIVLHSATKYLGGHSDVVAGLVTTNSKELASEIGFLQNSIGAVLGPQDSWLVQRGIKTLALRMEAHSANAQKIAEFLETSKAVSKVYYPGLNSHPGHEIAKKQMSAFGGMISFELTDENAVKDFVENLSYFTLAESLGGVESLIEVPAVMTHASIPKELREEIGIKDGLIRLSVGVEAIEDLLTDIKEALEKK.

Lys-196 is modified (N6-(pyridoxal phosphate)lysine).

This sequence belongs to the trans-sulfuration enzymes family. Pyridoxal 5'-phosphate is required as a cofactor.

Its subcellular location is the cytoplasm. The enzyme catalyses L,L-cystathionine + H2O = L-homocysteine + pyruvate + NH4(+). The catalysed reaction is an S-substituted L-cysteine + H2O = a thiol + pyruvate + NH4(+). Its pathway is amino-acid biosynthesis; L-methionine biosynthesis via de novo pathway; L-homocysteine from L-cystathionine: step 1/1. In terms of biological role, the enzymatic degradation of amino acids in cheese is believed to generate aroma compounds and therefore to be essential for flavor development. Cystathionine beta-lyase (CBL) can convert cystathionine to homocysteine but is also able to catalyze an alpha, gamma elimination. With methionine as a substrate, it produces volatile sulfur compounds which are important for flavor formation in Gouda cheese. The sequence is that of Cystathionine beta-lyase (metC) from Lactococcus lactis subsp. lactis (strain IL1403) (Streptococcus lactis).